Reading from the N-terminus, the 316-residue chain is Ornithine carbamoyltransferase (316 aa).

Carbamoyl phosphate contacts are provided by residues Ser57–Thr60, Gln84, Arg108, and His135–Gln138. L-ornithine contacts are provided by residues Asn166, Asp230, and Ser234–Met235. Carbamoyl phosphate-binding positions include Cys269–Leu270 and Arg297.

The protein belongs to the aspartate/ornithine carbamoyltransferase superfamily. OTCase family.

Its subcellular location is the cytoplasm. The enzyme catalyses carbamoyl phosphate + L-ornithine = L-citrulline + phosphate + H(+). It participates in amino-acid degradation; L-arginine degradation via ADI pathway; carbamoyl phosphate from L-arginine: step 2/2. Functionally, reversibly catalyzes the transfer of the carbamoyl group from carbamoyl phosphate (CP) to the N(epsilon) atom of ornithine (ORN) to produce L-citrulline. The sequence is that of Ornithine carbamoyltransferase from Bacillus cereus (strain 03BB102).